Here is a 207-residue protein sequence, read N- to C-terminus: D-aminoacyl-tRNA deacylase 1 (207 aa).

The short motif at 139–140 is the Gly-cisPro motif, important for rejection of L-amino acids element; that stretch reads GP. The interval 142 to 207 is disordered; it reads TIQLESPPAP…EGDVSSEREP (66 aa). 2 stretches are compositionally biased toward basic and acidic residues: residues 156–167 and 178–189; these read LLSKQEKQQQRK and SSREKAAQRSKV.

Belongs to the DTD family. Homodimer.

It localises to the cytoplasm. The enzyme catalyses a D-aminoacyl-tRNA + H2O = a tRNA + a D-alpha-amino acid + H(+). The catalysed reaction is glycyl-tRNA(Ala) + H2O = tRNA(Ala) + glycine + H(+). Functionally, D-aminoacyl-tRNA deacylase, with no observable activity on tRNAs charged with their cognate L-amino acid. Hydrolyzes correctly charged, achiral, glycyl-tRNA(Gly). Deacylates mischarged D.melanogaster and E.coli glycyl-tRNA(Ala), protecting cells against glycine mischarging by AlaRS. Acts via tRNA-based rather than protein-based catalysis; rejects L-amino acids rather than detecting D-amino acids in the active site. By recycling D-aminoacyl-tRNA to D-amino acids and free tRNA molecules, this enzyme counteracts the toxicity associated with the formation of D-aminoacyl-tRNA entities in vivo and helps enforce protein L-homochirality. The protein is D-aminoacyl-tRNA deacylase 1 of Danio rerio (Zebrafish).